The sequence spans 230 residues: MLRNCAMRLRTLGATPARRPGAARRLFSSEKVIRKDYALPNPSWTKDLRLLFDQFMKKCEDGSWKRMPSHRQNPTRAIQEFQTLFVDSKFKKEEQMSKAQQFTRSFEEGLGFEYAMFYNKVEKRTVSLFQGGLHLQGVPGFVHGGAIATIIDVTTGTCAISEGVAMTANLNITYKKPIPLLSVVVVNSQLQKIEGRKLFVSCTIQSIDEKTLYTEATALFIKLDPEKPLT.

Residues 1–27 (MLRNCAMRLRTLGATPARRPGAARRLF) constitute a mitochondrion transit peptide. Ser28 and Ser29 each carry phosphoserine. Lys46 and Lys57 each carry N6-succinyllysine. An N6-acetyllysine modification is found at Lys65. N6-succinyllysine is present on residues Lys89 and Lys98. The active-site Proton donor/acceptor is the Asp152. Substrate contacts are provided by residues Lys175 and 196 to 197 (RK). N6-succinyllysine is present on Lys197.

Belongs to the THEM4/THEM5 thioesterase family. In terms of assembly, homodimer and homotetramer. Interacts with AKT1 in the cytosol. As to quaternary structure, (Microbial infection) Interacts with V-AKT from AKT8 murine leukemia virus. In terms of processing, phosphorylated.

The protein resides in the cell membrane. Its subcellular location is the cell projection. It localises to the ruffle membrane. The protein localises to the cytoplasm. It is found in the mitochondrion. The protein resides in the mitochondrion inner membrane. Its subcellular location is the mitochondrion intermembrane space. It carries out the reaction hexadecanoyl-CoA + H2O = hexadecanoate + CoA + H(+). The catalysed reaction is octanoyl-CoA + H2O = octanoate + CoA + H(+). The enzyme catalyses decanoyl-CoA + H2O = decanoate + CoA + H(+). It catalyses the reaction dodecanoyl-CoA + H2O = dodecanoate + CoA + H(+). It carries out the reaction tetradecanoyl-CoA + H2O = tetradecanoate + CoA + H(+). The catalysed reaction is (9Z)-octadecenoyl-CoA + H2O = (9Z)-octadecenoate + CoA + H(+). The enzyme catalyses (5Z,8Z,11Z,14Z)-eicosatetraenoyl-CoA + H2O = (5Z,8Z,11Z,14Z)-eicosatetraenoate + CoA + H(+). Its function is as follows. Has acyl-CoA thioesterase activity towards medium and long-chain (C14 to C18) fatty acyl-CoA substrates, and probably plays a role in mitochondrial fatty acid metabolism. Plays a role in the apoptotic process, possibly via its regulation of AKT1 activity. The sequence is that of Acyl-coenzyme A thioesterase THEM4 (Them4) from Mus musculus (Mouse).